The chain runs to 374 residues: DNA replication and repair protein RecF (374 aa).

ATP is bound at residue glycine 34–threonine 41.

This sequence belongs to the RecF family.

It is found in the cytoplasm. Functionally, the RecF protein is involved in DNA metabolism; it is required for DNA replication and normal SOS inducibility. RecF binds preferentially to single-stranded, linear DNA. It also seems to bind ATP. The polypeptide is DNA replication and repair protein RecF (Rhizobium etli (strain CIAT 652)).